The following is a 632-amino-acid chain: Chaperone protein DnaK (632 aa).

The residue at position 198 (T198) is a Phosphothreonine; by autocatalysis. Residues 524 to 557 are disordered; that stretch reads RREAVDAKNHADSLVHSTEKALAEHGSKIEDSER.

It belongs to the heat shock protein 70 family.

In terms of biological role, acts as a chaperone. The sequence is that of Chaperone protein DnaK from Nitrobacter hamburgensis (strain DSM 10229 / NCIMB 13809 / X14).